Here is an 84-residue protein sequence, read N- to C-terminus: Toxin Tf2 (84 aa).

Residues 1 to 20 (MKRFLLFISILMMIGTIVVG) form the signal peptide. The region spanning 21–83 (KEGYAMDHEG…VWDYATNKCG (63 aa)) is the LCN-type CS-alpha/beta domain. Disulfide bonds link C31–C82, C35–C58, C43–C63, and C47–C65. C82 carries the cysteine amide modification.

This sequence belongs to the long (4 C-C) scorpion toxin superfamily. Sodium channel inhibitor family. Beta subfamily. Post-translationally, contains 4 disulfide bonds. As to expression, expressed by the venom gland.

The protein resides in the secreted. Its function is as follows. Beta toxins bind voltage-independently at site-4 of sodium channels (Nav) and shift the voltage of activation toward more negative potentials thereby affecting sodium channel activation and promoting spontaneous and repetitive firing. This toxin is active against hNav1.3/SCN3A. The chain is Toxin Tf2 from Tityus fasciolatus (Central Brazilian scorpion).